The primary structure comprises 644 residues: Threonine--tRNA ligase (644 aa).

The 61-residue stretch at 1–61 (MPDIQLPDGS…DQDAEVAIVT (61 aa)) folds into the TGS domain. The interval 242-535 (DHRRIGTELE…LIEHYEGKFP (294 aa)) is catalytic. Cys-335, His-386, and His-512 together coordinate Zn(2+).

It belongs to the class-II aminoacyl-tRNA synthetase family. Homodimer. Zn(2+) is required as a cofactor.

It localises to the cytoplasm. The catalysed reaction is tRNA(Thr) + L-threonine + ATP = L-threonyl-tRNA(Thr) + AMP + diphosphate + H(+). Functionally, catalyzes the attachment of threonine to tRNA(Thr) in a two-step reaction: L-threonine is first activated by ATP to form Thr-AMP and then transferred to the acceptor end of tRNA(Thr). Also edits incorrectly charged L-seryl-tRNA(Thr). This is Threonine--tRNA ligase from Acidithiobacillus ferrooxidans (strain ATCC 23270 / DSM 14882 / CIP 104768 / NCIMB 8455) (Ferrobacillus ferrooxidans (strain ATCC 23270)).